The chain runs to 179 residues: MVKEVVDSTTMKRVFTRITYEIIEQNKGISDLVFVGIKTRGVFIAERIAKRLEQLEGVTVPVGTLDITLYRDDQHDLNSHNEPQLNGNDIPVDITDKHVILIDDVLYTGRTIRAALDALMDLGRPKKISLAVLVDRGHRELPIRPDFVGKNIPTALNEQIKVAMQEIDEHDGITIEKLN.

Positions 99–111 (VILIDDVLYTGRT) match the PRPP-binding motif.

Belongs to the purine/pyrimidine phosphoribosyltransferase family. PyrR subfamily. As to quaternary structure, homodimer and homohexamer; in equilibrium.

The catalysed reaction is UMP + diphosphate = 5-phospho-alpha-D-ribose 1-diphosphate + uracil. Regulates transcriptional attenuation of the pyrimidine nucleotide (pyr) operon by binding in a uridine-dependent manner to specific sites on pyr mRNA. This disrupts an antiterminator hairpin in the RNA and favors formation of a downstream transcription terminator, leading to a reduced expression of downstream genes. Functionally, also displays a weak uracil phosphoribosyltransferase activity which is not physiologically significant. The chain is Bifunctional protein PyrR from Latilactobacillus sakei subsp. sakei (strain 23K) (Lactobacillus sakei subsp. sakei).